The primary structure comprises 230 residues: NADH-quinone oxidoreductase subunit 9 (230 aa).

4Fe-4S ferredoxin-type domains are found at residues 60-93 (GRPV…MQAK) and 104-133 (AWFE…MSKE). [4Fe-4S] cluster-binding residues include cysteine 73, cysteine 76, cysteine 79, cysteine 83, cysteine 113, cysteine 116, cysteine 119, and cysteine 123.

This sequence belongs to the complex I 23 kDa subunit family. In terms of assembly, NDH-1 is composed of 14 different subunits. Subunits Nqo7-14 constitute the membrane sector of the complex. [4Fe-4S] cluster is required as a cofactor.

Its subcellular location is the cell inner membrane. The catalysed reaction is a quinone + NADH + 5 H(+)(in) = a quinol + NAD(+) + 4 H(+)(out). In terms of biological role, NDH-1 shuttles electrons from NADH, via FMN and iron-sulfur (Fe-S) centers, to quinones in the respiratory chain. The immediate electron acceptor for the enzyme in this species is believed to be menaquinone. Couples the redox reaction to proton translocation (for every two electrons transferred, four hydrogen ions are translocated across the cytoplasmic membrane), and thus conserves the redox energy in a proton gradient. The chain is NADH-quinone oxidoreductase subunit 9 (nqo9) from Rhodothermus marinus (Rhodothermus obamensis).